A 320-amino-acid chain; its full sequence is Malate dehydrogenase (320 aa).

Residues 10-15 (GAGNIG) and Asp34 contribute to the NAD(+) site. Substrate is bound by residues Arg83 and Arg89. NAD(+) contacts are provided by residues Asn96 and 119–121 (ITN). 2 residues coordinate substrate: Asn121 and Arg152. His176 acts as the Proton acceptor in catalysis.

Belongs to the LDH/MDH superfamily. MDH type 3 family.

The catalysed reaction is (S)-malate + NAD(+) = oxaloacetate + NADH + H(+). Catalyzes the reversible oxidation of malate to oxaloacetate. This chain is Malate dehydrogenase, found in Novosphingobium aromaticivorans (strain ATCC 700278 / DSM 12444 / CCUG 56034 / CIP 105152 / NBRC 16084 / F199).